Reading from the N-terminus, the 373-residue chain is tRNA-specific 2-thiouridylase MnmA (373 aa).

ATP is bound by residues 12–19 (GMSGGVDS) and M38. Residues 98-100 (NPD) form an interaction with target base in tRNA region. The Nucleophile role is filled by C103. A disulfide bond links C103 and C200. G127 provides a ligand contact to ATP. The interaction with tRNA stretch occupies residues 150 to 152 (KDQ). C200 acts as the Cysteine persulfide intermediate in catalysis. Positions 312 to 313 (RY) are interaction with tRNA.

This sequence belongs to the MnmA/TRMU family.

Its subcellular location is the cytoplasm. It catalyses the reaction S-sulfanyl-L-cysteinyl-[protein] + uridine(34) in tRNA + AH2 + ATP = 2-thiouridine(34) in tRNA + L-cysteinyl-[protein] + A + AMP + diphosphate + H(+). In terms of biological role, catalyzes the 2-thiolation of uridine at the wobble position (U34) of tRNA, leading to the formation of s(2)U34. The chain is tRNA-specific 2-thiouridylase MnmA from Streptococcus pneumoniae (strain CGSP14).